The chain runs to 788 residues: ATP-dependent 6-phosphofructokinase, platelet type (788 aa).

At methionine 1 the chain carries N-acetylmethionine. The N-terminal catalytic PFK domain 1 stretch occupies residues methionine 1 to isoleucine 399. A phosphoserine mark is found at serine 2, serine 6, serine 12, and serine 21. Residues glycine 34, arginine 97 to cysteine 98, and glycine 127 to serine 130 each bind ATP. Aspartate 128 lines the Mg(2+) pocket. At serine 142 the chain carries Phosphoserine. Substrate is bound by residues serine 173–aspartate 175, arginine 210, methionine 217–arginine 219, glutamate 273, arginine 301, and histidine 307–arginine 310. Residue aspartate 175 is the Proton acceptor of the active site. The residue at position 386 (serine 386) is a Phosphoserine. N6-acetyllysine is present on lysine 395. The tract at residues lysine 400–cysteine 411 is interdomain linker. The C-terminal regulatory PFK domain 2 stretch occupies residues asparagine 412–isoleucine 788. Beta-D-fructose 2,6-bisphosphate is bound at residue arginine 481. At lysine 486 the chain carries N6-acetyllysine. Residues threonine 538–asparagine 542, arginine 576, methionine 583–glycine 585, and glutamate 639 contribute to the beta-D-fructose 2,6-bisphosphate site. The O-linked (GlcNAc) serine glycan is linked to serine 540. Residue tyrosine 651 is modified to Phosphotyrosine. Beta-D-fructose 2,6-bisphosphate-binding positions include arginine 665 and histidine 671–glutamine 674. Lysine 688 is modified (N6-acetyllysine). Residue arginine 744 coordinates beta-D-fructose 2,6-bisphosphate.

It belongs to the phosphofructokinase type A (PFKA) family. ATP-dependent PFK group I subfamily. Eukaryotic two domain clade 'E' sub-subfamily. As to quaternary structure, homo- and heterotetramers. Phosphofructokinase (PFK) enzyme functions as a tetramer composed of different combinations of 3 types of subunits, called PFKM (M), PFKL (L) and PFKP (P). The composition of the PFK tetramer differs according to the tissue type it is present in. The kinetic and regulatory properties of the tetrameric enzyme are dependent on the subunit composition, hence can vary across tissues. Interacts with ATG4B; promoting phosphorylation of ATG4B. The cofactor is Mg(2+). In terms of processing, glcNAcylation decreases enzyme activity. Post-translationally, phosphorylation at Ser-386 promotes interaction with ATG4B. Expressed at high level in neuroendocrine tissues.

It is found in the cytoplasm. The catalysed reaction is beta-D-fructose 6-phosphate + ATP = beta-D-fructose 1,6-bisphosphate + ADP + H(+). It participates in carbohydrate degradation; glycolysis; D-glyceraldehyde 3-phosphate and glycerone phosphate from D-glucose: step 3/4. Its activity is regulated as follows. Allosterically activated by ADP, AMP, or fructose 2,6-bisphosphate, and allosterically inhibited by ATP or citrate. Its function is as follows. Catalyzes the phosphorylation of D-fructose 6-phosphate to fructose 1,6-bisphosphate by ATP, the first committing step of glycolysis. In Rattus norvegicus (Rat), this protein is ATP-dependent 6-phosphofructokinase, platelet type (Pfkp).